Consider the following 101-residue polypeptide: NADH-quinone oxidoreductase subunit K (101 aa).

3 helical membrane passes run 4–24, 30–50, and 61–81; these read LGHY…GIFL, IVLL…FVAF, and VFVF…LAIL.

It belongs to the complex I subunit 4L family. NDH-1 is composed of 14 different subunits. Subunits NuoA, H, J, K, L, M, N constitute the membrane sector of the complex.

Its subcellular location is the cell inner membrane. The catalysed reaction is a quinone + NADH + 5 H(+)(in) = a quinol + NAD(+) + 4 H(+)(out). NDH-1 shuttles electrons from NADH, via FMN and iron-sulfur (Fe-S) centers, to quinones in the respiratory chain. The immediate electron acceptor for the enzyme in this species is believed to be ubiquinone. Couples the redox reaction to proton translocation (for every two electrons transferred, four hydrogen ions are translocated across the cytoplasmic membrane), and thus conserves the redox energy in a proton gradient. This Leptothrix cholodnii (strain ATCC 51168 / LMG 8142 / SP-6) (Leptothrix discophora (strain SP-6)) protein is NADH-quinone oxidoreductase subunit K.